The primary structure comprises 426 residues: Kynureninase (426 aa).

Residues leucine 110, serine 111, 138–141, aspartate 223, histidine 226, and tyrosine 248 contribute to the pyridoxal 5'-phosphate site; that span reads FPSD. Residue lysine 249 is modified to N6-(pyridoxal phosphate)lysine. Pyridoxal 5'-phosphate contacts are provided by tryptophan 279 and asparagine 307.

It belongs to the kynureninase family. In terms of assembly, homodimer. Pyridoxal 5'-phosphate is required as a cofactor.

It catalyses the reaction L-kynurenine + H2O = anthranilate + L-alanine + H(+). It carries out the reaction 3-hydroxy-L-kynurenine + H2O = 3-hydroxyanthranilate + L-alanine + H(+). It functions in the pathway amino-acid degradation; L-kynurenine degradation; L-alanine and anthranilate from L-kynurenine: step 1/1. The protein operates within cofactor biosynthesis; NAD(+) biosynthesis; quinolinate from L-kynurenine: step 2/3. Its function is as follows. Catalyzes the cleavage of L-kynurenine (L-Kyn) and L-3-hydroxykynurenine (L-3OHKyn) into anthranilic acid (AA) and 3-hydroxyanthranilic acid (3-OHAA), respectively. This Myxococcus xanthus (strain DK1622) protein is Kynureninase.